The primary structure comprises 437 residues: GTPase Obg (437 aa).

An Obg domain is found at 2-160; that stretch reads SMFLDTAKIS…RELQLELKIL (159 aa). The OBG-type G domain occupies 161-338; it reads ADVGLVGFPS…LMDATAELLA (178 aa). Residues 167–174, 192–196, 214–217, 284–287, and 319–321 each bind GTP; these read GFPSVGKS, FTTIV, DLPG, NKMD, and SSL. S174 and T194 together coordinate Mg(2+). In terms of domain architecture, OCT spans 359–437; it reads GFNEDERPFE…IGNFEFEFVD (79 aa).

Belongs to the TRAFAC class OBG-HflX-like GTPase superfamily. OBG GTPase family. Monomer. Mg(2+) is required as a cofactor.

The protein localises to the cytoplasm. Functionally, an essential GTPase which binds GTP, GDP and possibly (p)ppGpp with moderate affinity, with high nucleotide exchange rates and a fairly low GTP hydrolysis rate. Plays a role in control of the cell cycle, stress response, ribosome biogenesis and in those bacteria that undergo differentiation, in morphogenesis control. This is GTPase Obg from Streptococcus agalactiae serotype Ia (strain ATCC 27591 / A909 / CDC SS700).